Consider the following 333-residue polypeptide: Transmembrane protein I329L (333 aa).

Positions 1–31 are cleaved as a signal peptide; that stretch reads MLRVFIFFVFLGSGLTGRIKPQITCKYFISE. Residues Asn32, Asn39, Asn44, Asn76, Asn82, and Asn101 are each glycosylated (N-linked (GlcNAc...) asparagine; by host). Topologically, residues 32 to 239 are extracellular; that stretch reads NNTWYKYNVT…NTERYKSCYP (208 aa). The LRR repeat unit spans residues 112–133; sequence ELKFLDLRYNDLQVIEYNILRK. 3 N-linked (GlcNAc...) asparagine; by host glycosylation sites follow: Asn181, Asn185, and Asn219. Cys195 and Cys237 are oxidised to a cystine. The helical transmembrane segment at 240–260 threads the bilayer; that stretch reads LVFISILCSCISFLFLFICLL. Over 261–333 the chain is Cytoplasmic; it reads RSICKKYSCT…EKKVSCSRRK (73 aa).

This sequence belongs to the asfivirus I329L family. Highly glycosylated.

It localises to the host endoplasmic reticulum membrane. The protein resides in the host Golgi apparatus membrane. Viral TLR3 homolog that probably prevents TLR3 dimerization and subsequent induction of IFN. Inhibits dsRNA-stimulated activation of NF-kB and IRF3. This is Transmembrane protein I329L from Ornithodoros (relapsing fever ticks).